The following is a 250-amino-acid chain: Proteasome subunit alpha type-2 (250 aa).

Lys108 is covalently cross-linked (Glycyl lysine isopeptide (Lys-Gly) (interchain with G-Cter in ubiquitin)).

The protein belongs to the peptidase T1A family. In terms of assembly, the 26S proteasome consists of a 20S proteasome core and two 19S regulatory subunits. The 20S proteasome core is composed of 28 subunits that are arranged in four stacked rings, resulting in a barrel-shaped structure. The two end rings are each formed by seven alpha subunits, and the two central rings are each formed by seven beta subunits. The catalytic chamber with the active sites is on the inside of the barrel.

The protein resides in the cytoplasm. It localises to the nucleus. In terms of biological role, the proteasome degrades poly-ubiquitinated proteins in the cytoplasm and in the nucleus. It is essential for the regulated turnover of proteins and for the removal of misfolded proteins. The proteasome is a multicatalytic proteinase complex that is characterized by its ability to cleave peptides with Arg, Phe, Tyr, Leu, and Glu adjacent to the leaving group at neutral or slightly basic pH. It has an ATP-dependent proteolytic activity. This chain is Proteasome subunit alpha type-2 (PRE8), found in Saccharomyces cerevisiae (strain ATCC 204508 / S288c) (Baker's yeast).